The primary structure comprises 772 residues: Heat shock protein 88 (772 aa).

Disordered regions lie at residues 496 to 519 (TAAP…AEEK) and 729 to 772 (LGKP…DILD). Positions 497-513 (AAPAETPAETPANGEAA) are enriched in low complexity. Basic and acidic residues predominate over residues 735–772 (KPVEVPKEEPKDTPMESKDAPAEEPVATKDQKMDDILD).

The protein belongs to the heat shock protein 70 family.

Its function is as follows. May function in protein folding and assembly, and disassembly of protein complexes. This is Heat shock protein 88 (hspH) from Dictyostelium discoideum (Social amoeba).